We begin with the raw amino-acid sequence, 271 residues long: Plasmanylethanolamine desaturase 1 (271 aa).

Residues 1-25 are disordered; it reads MAGAEDAPGRQPELDEDETAEGRRW. 3 helical membrane-spanning segments follow: residues 48–68, 75–95, and 166–186; these read WCSV…LLLL, PLVI…SGLV, and LYPW…TNQI. Positions 187–191 match the Histidine box-1 motif; it reads HKWSH. The short motif at 214–218 is the Histidine box-2 element; that stretch reads HHRIH.

It belongs to the fatty acid desaturase CarF family.

Its subcellular location is the endoplasmic reticulum membrane. It carries out the reaction a 1-(1,2-saturated alkyl)-2-acyl-sn-glycero-3-phosphoethanolamine + 2 Fe(II)-[cytochrome b5] + O2 + 2 H(+) = a 1-O-(1Z-alkenyl)-2-acyl-sn-glycero-3-phosphoethanolamine + 2 Fe(III)-[cytochrome b5] + 2 H2O. The enzyme catalyses a 1-O-hexadecyl-2-acyl-sn-glycero-3-phosphoethanolamine + 2 Fe(II)-[cytochrome b5] + O2 + 2 H(+) = a 1-O-(1Z-hexadecenyl)-2-acyl-sn-glycero-3-phosphoethanolamine + 2 Fe(III)-[cytochrome b5] + 2 H2O. The catalysed reaction is a 1-O-octadecyl-2-acyl-sn-glycero-3-phosphoethanolamine + 2 Fe(II)-[cytochrome b5] + O2 + 2 H(+) = a 1-O-(1Z-octadecenyl)-2-acyl-sn-glycero-3-phosphoethanolamine + 2 Fe(III)-[cytochrome b5] + 2 H2O. It catalyses the reaction a 1-O-(9Z-octadecenyl)-2-acyl-sn-glycero-3-phosphoethanolamine + 2 Fe(II)-[cytochrome b5] + O2 + 2 H(+) = a 1-O-(1Z,9Z-octadecadienyl)-2-acyl-sn-glycero-3-phosphoethanolamine + 2 Fe(III)-[cytochrome b5] + 2 H2O. Its pathway is lipid metabolism; fatty acid metabolism. In terms of biological role, plasmanylethanolamine desaturase involved in plasmalogen biogenesis in the endoplasmic reticulum membrane. Plasmalogens are glycerophospholipids with a hydrocarbon chain linked by a vinyl ether bond at the glycerol sn-1 position, and are involved in antioxidative and signaling mechanisms. This Mus musculus (Mouse) protein is Plasmanylethanolamine desaturase 1.